A 506-amino-acid chain; its full sequence is MSISIRPDEISSIIQQQIEQYDQEVKVANVGTVLQVGDGIARIYGLEKAMAGELLEFEDGTVGIAQNLEEDNVGAVLMGEGREIQEGSTVTATGRIAQIGVGEALIGRVVDALGRAIDGKGDIKASESRLIESPAPGIIARRSVHEPMQTGITAIDSMIPIGRGQRELIIGDRQTGKTAIAIDTIINQKGEDVVCVYVAIGQKASTVANVVQTLQEKGAMDYTVVVAAGASEPATLQFLAPYTGATIAEYFMYKGKATLVIYDDLSKQAQAYRQMSLLLRRPPGREAYPGDVFYIHSRLLERAAKLSDELGKGSMTALPIIETQAGDVSAYIPTNVISITDGQIFLSSDLFNAGIRPAVNPGISVSRVGSAAQTKAMKKVAGKIKLELAQFDDLQAFAQFASDLDKATQDQLARGQRLRELLKQSQNQPLSVAEQVAILYAGINGYLDDIPVDKVTTFTKGLRDYLKSGVNPYFQDVQSKKALGDDEEKALKAALEDYKKTFKATA.

171 to 178 (GDRQTGKT) contacts ATP.

This sequence belongs to the ATPase alpha/beta chains family. As to quaternary structure, F-type ATPases have 2 components, CF(1) - the catalytic core - and CF(0) - the membrane proton channel. CF(1) has five subunits: alpha(3), beta(3), gamma(1), delta(1), epsilon(1). CF(0) has four main subunits: a(1), b(1), b'(1) and c(9-12).

It is found in the cellular thylakoid membrane. The catalysed reaction is ATP + H2O + 4 H(+)(in) = ADP + phosphate + 5 H(+)(out). Functionally, produces ATP from ADP in the presence of a proton gradient across the membrane. The alpha chain is a regulatory subunit. This is ATP synthase subunit alpha from Nostoc sp. (strain PCC 7120 / SAG 25.82 / UTEX 2576).